We begin with the raw amino-acid sequence, 217 residues long: Phosphatidylserine decarboxylase proenzyme (217 aa).

Serine 182 functions as the Schiff-base intermediate with substrate; via pyruvic acid in the catalytic mechanism. Serine 182 is modified (pyruvic acid (Ser); by autocatalysis).

The protein belongs to the phosphatidylserine decarboxylase family. PSD-A subfamily. Heterodimer of a large membrane-associated beta subunit and a small pyruvoyl-containing alpha subunit. The cofactor is pyruvate. Post-translationally, is synthesized initially as an inactive proenzyme. Formation of the active enzyme involves a self-maturation process in which the active site pyruvoyl group is generated from an internal serine residue via an autocatalytic post-translational modification. Two non-identical subunits are generated from the proenzyme in this reaction, and the pyruvate is formed at the N-terminus of the alpha chain, which is derived from the carboxyl end of the proenzyme. The post-translation cleavage follows an unusual pathway, termed non-hydrolytic serinolysis, in which the side chain hydroxyl group of the serine supplies its oxygen atom to form the C-terminus of the beta chain, while the remainder of the serine residue undergoes an oxidative deamination to produce ammonia and the pyruvoyl prosthetic group on the alpha chain.

Its subcellular location is the cell membrane. The catalysed reaction is a 1,2-diacyl-sn-glycero-3-phospho-L-serine + H(+) = a 1,2-diacyl-sn-glycero-3-phosphoethanolamine + CO2. It functions in the pathway phospholipid metabolism; phosphatidylethanolamine biosynthesis; phosphatidylethanolamine from CDP-diacylglycerol: step 2/2. Functionally, catalyzes the formation of phosphatidylethanolamine (PtdEtn) from phosphatidylserine (PtdSer). In Prosthecochloris aestuarii (strain DSM 271 / SK 413), this protein is Phosphatidylserine decarboxylase proenzyme.